The chain runs to 400 residues: Argininosuccinate synthase (400 aa).

ATP contacts are provided by residues 9–17 (AYSGGVDTS) and alanine 37. Tyrosine 88 lines the L-citrulline pocket. Glycine 118 serves as a coordination point for ATP. The L-aspartate site is built by threonine 120, asparagine 124, and aspartate 125. Position 124 (asparagine 124) interacts with L-citrulline. Positions 128, 176, 185, 261, and 273 each coordinate L-citrulline.

This sequence belongs to the argininosuccinate synthase family. Type 1 subfamily. Homotetramer.

It localises to the cytoplasm. The enzyme catalyses L-citrulline + L-aspartate + ATP = 2-(N(omega)-L-arginino)succinate + AMP + diphosphate + H(+). It participates in amino-acid biosynthesis; L-arginine biosynthesis; L-arginine from L-ornithine and carbamoyl phosphate: step 2/3. The polypeptide is Argininosuccinate synthase (Prochlorococcus marinus (strain MIT 9211)).